The chain runs to 200 residues: UDP-N-acetylglucosamine transferase subunit ALG13 (200 aa).

Belongs to the glycosyltransferase 28 family. As to quaternary structure, heterodimer with ALG14 to form a functional enzyme.

The protein resides in the endoplasmic reticulum. It carries out the reaction an N-acetyl-alpha-D-glucosaminyl-diphospho-di-trans,poly-cis-dolichol + UDP-N-acetyl-alpha-D-glucosamine = an N,N'-diacetylchitobiosyl-diphospho-di-trans,poly-cis-dolichol + UDP + H(+). Functionally, involved in protein N-glycosylation. Essential for the second step of the dolichol-linked oligosaccharide pathway. This chain is UDP-N-acetylglucosamine transferase subunit ALG13 (ALG13), found in Cryptococcus neoformans var. neoformans serotype D (strain B-3501A) (Filobasidiella neoformans).